A 1088-amino-acid chain; its full sequence is Methionine S-methyltransferase (1088 aa).

It belongs to the class I-like SAM-binding methyltransferase superfamily. Homotetramer.

Its subcellular location is the cytoplasm. The catalysed reaction is L-methionine + S-adenosyl-L-methionine = S-methyl-L-methionine + S-adenosyl-L-homocysteine. Its function is as follows. Catalyzes the S-methylmethionine (SMM) biosynthesis from adenosyl-L-homocysteine (AdoMet) and methionine. SMM biosynthesis (by MMT1) and degradation (by HMT-1, HMT-2 and HMT-3) constitute the SMM cycle in plants, which is probably required to achieve short term control of AdoMet level. Also able to catalyze the selenium-methylmethionine (SeMM) from AdoMet and selenium-methionine (SeMet). May play a role in phoem sulfur transport; such function is however not essential. The protein is Methionine S-methyltransferase (MMT1) of Wollastonia biflora (Beach sunflower).